Consider the following 202-residue polypeptide: Securin (202 aa).

Positions 36 to 55 are disordered; it reads DGRSQVSTPHVGKMFDAPPA. Residues 61-64 carry the D-box motif; that stretch reads RKAL. 2 consecutive short sequence motifs (TEK-box) follow at residues 71–73 and 94–96; these read TEK. An SH3-binding motif is present at residues 163–173; sequence PPSPLKMPPLL. Phosphoserine; by CDK1 is present on Ser-165.

It belongs to the securin family. As to quaternary structure, interacts with RPS10 and DNAJA1. Interacts with the caspase-like ESPL1, and prevents its protease activity probably by covering its active site. Interacts with TP53 and blocks its activity probably by blocking its binding to DNA. Interacts with the Ku 70 kDa subunit of ds-DNA kinase. Interacts with PTTG1IP. Post-translationally, phosphorylated at Ser-165 by CDK1 during mitosis. Phosphorylated in vitro by ds-DNA kinase. In terms of processing, ubiquitinated through 'Lys-11' linkage of ubiquitin moieties by the anaphase promoting complex (APC) at the onset of anaphase, conducting to its degradation. 'Lys-11'-linked ubiquitination is mediated by the E2 ligase UBE2C/UBCH10.

The protein localises to the cytoplasm. It is found in the nucleus. Functionally, regulatory protein, which plays a central role in chromosome stability, in the p53/TP53 pathway, and DNA repair. Probably acts by blocking the action of key proteins. During the mitosis, it blocks Separase/ESPL1 function, preventing the proteolysis of the cohesin complex and the subsequent segregation of the chromosomes. At the onset of anaphase, it is ubiquitinated, conducting to its destruction and to the liberation of ESPL1. Its function is however not limited to a blocking activity, since it is required to activate ESPL1. Negatively regulates the transcriptional activity and related apoptosis activity of TP53. The negative regulation of TP53 may explain the strong transforming capability of the protein when it is overexpressed. May also play a role in DNA repair via its interaction with Ku, possibly by connecting DNA damage-response pathways with sister chromatid separation. In Bos taurus (Bovine), this protein is Securin (PTTG1).